The following is a 248-amino-acid chain: Protein PARTING DANCERS homolog (248 aa).

Positions 1–10 are enriched in polar residues; it reads MERSTHSTGW. Residues 1–25 form a disordered region; sequence MERSTHSTGWTCLPPPPPEPAAPGR.

This sequence belongs to the ERCC1/RAD10/SWI10 family. As to quaternary structure, interacts with SHOC1 (via C-terminus). Interacts with HEI10. In terms of tissue distribution, highly expressed in anthers and pistil during meiosis. Expressed in pollen mother cells (PMCs) during meiosis. Expressed at low levels in roots, shoots, leaves, flowers, and glumes.

The protein resides in the chromosome. Its subcellular location is the nucleus. It localises to the cytoplasm. It is found in the cell membrane. In terms of biological role, essential for normal crossover (CO) formation during meiosis. Essential component for the formation of class I meiotic COs. Interacts with SHOC1, another meiotic component, to regulate CO formation, possibly by stabilizing the recombination intermediates during meiosis. PTD and SHOC1 may form transient heterotrimeric or heterotetrameric complexes with HEI10 and/or ZIP4 to promote class I COs formation. Does not seem to be involved in early meiotic recombination steps involving double-strand break (DSB) formation, processing, and single-strand invasion. Does not seem to be involved in homologous pairing or synaptonemal complex (SC) assembly. The chain is Protein PARTING DANCERS homolog from Oryza sativa subsp. japonica (Rice).